The primary structure comprises 379 residues: Peritrophin-48 (379 aa).

Residues 1 to 20 (MKAKTLTATLALILLAFAQA) form the signal peptide. 2 Chitin-binding type-2 domains span residues 25-83 (ASYC…NCFF) and 86-143 (ANPC…NTGN). Intrachain disulfides connect cysteine 60–cysteine 73 and cysteine 120–cysteine 133. N-linked (GlcNAc...) asparagine glycans are attached at residues asparagine 150 and asparagine 168. Chitin-binding type-2 domains are found at residues 151 to 208 (LSVC…ACSR), 224 to 283 (TSPC…RTLK), and 285 to 356 (CNRC…ACEN). An intrachain disulfide couples cysteine 185 to cysteine 198. 2 N-linked (GlcNAc...) asparagine glycosylation sites follow: asparagine 247 and asparagine 252. A disulfide bridge links cysteine 324 with cysteine 337. Asparagine 341, asparagine 356, and asparagine 373 each carry an N-linked (GlcNAc...) asparagine glycan.

In terms of processing, glycosylated. Larval peritrophic membrane.

Functionally, binds chitin and may bind related oligosaccharide structures. In Chrysomya bezziana (Old world screw-worm fly), this protein is Peritrophin-48.